We begin with the raw amino-acid sequence, 118 residues long: Large ribosomal subunit protein bL20 (118 aa).

Belongs to the bacterial ribosomal protein bL20 family.

Its function is as follows. Binds directly to 23S ribosomal RNA and is necessary for the in vitro assembly process of the 50S ribosomal subunit. It is not involved in the protein synthesizing functions of that subunit. The chain is Large ribosomal subunit protein bL20 from Trichodesmium erythraeum (strain IMS101).